We begin with the raw amino-acid sequence, 318 residues long: Acetyl-coenzyme A carboxylase carboxyl transferase subunit alpha (318 aa).

Residues 39–293 (KLEKKVDKMR…HEALARHLKE (255 aa)) enclose the CoA carboxyltransferase C-terminal domain.

It belongs to the AccA family. In terms of assembly, acetyl-CoA carboxylase is a heterohexamer composed of biotin carboxyl carrier protein (AccB), biotin carboxylase (AccC) and two subunits each of ACCase subunit alpha (AccA) and ACCase subunit beta (AccD).

The protein localises to the cytoplasm. The enzyme catalyses N(6)-carboxybiotinyl-L-lysyl-[protein] + acetyl-CoA = N(6)-biotinyl-L-lysyl-[protein] + malonyl-CoA. It participates in lipid metabolism; malonyl-CoA biosynthesis; malonyl-CoA from acetyl-CoA: step 1/1. Component of the acetyl coenzyme A carboxylase (ACC) complex. First, biotin carboxylase catalyzes the carboxylation of biotin on its carrier protein (BCCP) and then the CO(2) group is transferred by the carboxyltransferase to acetyl-CoA to form malonyl-CoA. The chain is Acetyl-coenzyme A carboxylase carboxyl transferase subunit alpha from Geobacter metallireducens (strain ATCC 53774 / DSM 7210 / GS-15).